Here is an 810-residue protein sequence, read N- to C-terminus: Volume-regulated anion channel subunit LRRC8A (810 aa).

Position 1 is an N-acetylmethionine (M1). Residues 1–22 are Cytoplasmic-facing; that stretch reads MIPVTELRYFADTQPAYRILKP. The helical transmembrane segment at 23–47 threads the bilayer; the sequence is WWDVFTDYISIVMLMIAVFGGTLQV. Residues 48–123 lie on the Extracellular side of the membrane; that stretch reads TQDKMICLPC…YENRLHWFAK (76 aa). Disulfide bonds link C54/C310, C57/C65, and C113/C295. 2 N-linked (GlcNAc...) asparagine glycosylation sites follow: N66 and N83. Residues 124–142 traverse the membrane as a helical segment; sequence YFPYLVLLHTLIFLACSNF. At 143-264 the chain is on the cytoplasmic side; sequence WFKFPRTSSK…EEGDIVYRLY (122 aa). T200 is modified (phosphothreonine). S202 is subject to Phosphoserine. Residue T215 is modified to Phosphothreonine. S217 bears the Phosphoserine mark. The chain crosses the membrane as a helical span at residues 265–286; the sequence is MRQTIIKVIKFALIICYTVYYV. The Extracellular segment spans residues 287–316; the sequence is HNIKFDVDCTVDIESLTGYRTYRCAHPLAT. A helical membrane pass occupies residues 317 to 341; the sequence is LFKILASFYISLVIFYGLICMYTLW. The Cytoplasmic portion of the chain corresponds to 342–810; sequence WMLRRSLKKY…RLWRADKEQA (469 aa). 17 LRR repeats span residues 411–422, 423–445, 447–468, 469–492, 493–515, 518–542, 543–565, 567–589, 590–613, 614–637, 639–661, 662–684, 686–707, 708–730, 732–753, 754–776, and 778–801; these read WTLDKLRQRLTK, NAQD…VFDL, ELEV…IAQL, TGLK…AFLR, ENLR…IYSL, LEEL…GLRE, LKRL…VTDV, VHLQ…SLKK, MVNL…IFSL, HNLQ…SFQH, HRLT…IGNL, TNLE…LFYC, KLRY…IGLL, QNLQ…LFQC, KLRA…VGEL, TNLT…LGEC, and LLKR…VKER. The short motif at 706-707 is the Di-leucine motif element; it reads LL.

The protein belongs to the LRRC8 family. In terms of assembly, heterohexamer; oligomerizes with other LRRC8 proteins (LRRC8B, LRRC8C, LRRC8D and/or LRRC8E) to form a heterohexamer. Can form homohexamers in vitro, but these have lower conductance than heterohexamers. In vivo, the subunit composition may depend primarily on expression levels, and heterooligomeric channels containing various proportions of the different LRRC8 proteins may coexist. Interact with GRB2. Interacts with NOX4; this interaction prevents the ubiquitin-mediated degradation of LRRC8A. Post-translationally, N-glycosylated. In terms of tissue distribution, ubiquitously expressed. High levels detected in the bone marrow; lower levels found in peripheral blood cells. Highly expressed in pancreatic beta cells.

It localises to the cell membrane. The protein resides in the lysosome membrane. It catalyses the reaction chloride(in) = chloride(out). The catalysed reaction is iodide(out) = iodide(in). It carries out the reaction taurine(out) = taurine(in). The enzyme catalyses L-aspartate(out) = L-aspartate(in). It catalyses the reaction L-glutamate(out) = L-glutamate(in). The catalysed reaction is myo-inositol(out) = myo-inositol(in). It carries out the reaction 2',3'-cGAMP(out) = 2',3'-cGAMP(in). Its activity is regulated as follows. Inhibited by (4-[(2-butyl-6,7-dichloro-2-cyclopentyl-2,3-dihydro-1-oxo-1H-inden-5-yl)oxy]butanoic acid), which plugs the channel like a cork in a bottle by binding in the extracellular selectivity filter and sterically occluding ion conduction. Lipids may block conduction in closed heterohexameric channels. Essential component of the volume-regulated anion channel (VRAC, also named VSOAC channel), an anion channel required to maintain a constant cell volume in response to extracellular or intracellular osmotic changes. The VRAC channel conducts iodide better than chloride and can also conduct organic osmolytes like taurine. Mediates efflux of amino acids, such as aspartate and glutamate, in response to osmotic stress. In complex with LRRC8C or LRRC8E, acts as a transporter of immunoreactive cyclic dinucleotide GMP-AMP (2'-3'-cGAMP), an immune messenger produced in response to DNA virus in the cytosol: mediates both import and export of 2'-3'-cGAMP, thereby promoting transfer of 2'-3'-cGAMP to bystander cells. In contrast, complexes containing LRRC8D inhibit transport of 2'-3'-cGAMP. Required for in vivo channel activity, together with at least one other family member (LRRC8B, LRRC8C, LRRC8D or LRRC8E); channel characteristics depend on the precise subunit composition. Can form functional channels by itself (in vitro). Involved in B-cell development: required for the pro-B cell to pre-B cell transition. Also required for T-cell development. Required for myoblast differentiation: VRAC activity promotes membrane hyperpolarization and regulates insulin-stimulated glucose metabolism and oxygen consumption. Also acts as a regulator of glucose-sensing in pancreatic beta cells: VRAC currents, generated in response to hypotonicity- or glucose-induced beta cell swelling, depolarize cells, thereby causing electrical excitation, leading to increase glucose sensitivity and insulin secretion. Also plays a role in lysosome homeostasis by forming functional lysosomal VRAC channels in response to low cytoplasmic ionic strength condition: lysosomal VRAC channels are necessary for the formation of large lysosome-derived vacuoles, which store and then expel excess water to maintain cytosolic water homeostasis. Acts as a key factor in NLRP3 inflammasome activation by modulating itaconate efflux and mitochondria function. The chain is Volume-regulated anion channel subunit LRRC8A from Mus musculus (Mouse).